The sequence spans 287 residues: Protoheme IX farnesyltransferase (287 aa).

7 helical membrane passes run 19 to 39 (LMVA…VTIT), 100 to 120 (MVLC…IVAV), 134 to 154 (FALL…WLAV), 162 to 182 (MLVV…WLHA), 212 to 232 (VWFH…LLEG), 233 to 253 (VGMR…AMLA), and 267 to 287 (VLCA…VSLF).

It belongs to the UbiA prenyltransferase family. Protoheme IX farnesyltransferase subfamily.

Its subcellular location is the cell inner membrane. It catalyses the reaction heme b + (2E,6E)-farnesyl diphosphate + H2O = Fe(II)-heme o + diphosphate. Its pathway is porphyrin-containing compound metabolism; heme O biosynthesis; heme O from protoheme: step 1/1. Functionally, converts heme B (protoheme IX) to heme O by substitution of the vinyl group on carbon 2 of heme B porphyrin ring with a hydroxyethyl farnesyl side group. The protein is Protoheme IX farnesyltransferase of Nitratidesulfovibrio vulgaris (strain DP4) (Desulfovibrio vulgaris).